The sequence spans 156 residues: Small ribosomal subunit protein uS7 (156 aa).

Belongs to the universal ribosomal protein uS7 family. In terms of assembly, part of the 30S ribosomal subunit. Contacts proteins S9 and S11.

Its function is as follows. One of the primary rRNA binding proteins, it binds directly to 16S rRNA where it nucleates assembly of the head domain of the 30S subunit. Is located at the subunit interface close to the decoding center, probably blocks exit of the E-site tRNA. The polypeptide is Small ribosomal subunit protein uS7 (Thermobifida fusca (strain YX)).